The chain runs to 343 residues: Uroporphyrinogen decarboxylase (343 aa).

Substrate-binding positions include 24–28 (RQAGR), Phe-43, Asp-74, Tyr-151, Ser-206, and His-321.

It belongs to the uroporphyrinogen decarboxylase family. Homodimer.

The protein resides in the cytoplasm. The catalysed reaction is uroporphyrinogen III + 4 H(+) = coproporphyrinogen III + 4 CO2. It participates in porphyrin-containing compound metabolism; protoporphyrin-IX biosynthesis; coproporphyrinogen-III from 5-aminolevulinate: step 4/4. Its function is as follows. Catalyzes the decarboxylation of four acetate groups of uroporphyrinogen-III to yield coproporphyrinogen-III. This Thermosynechococcus vestitus (strain NIES-2133 / IAM M-273 / BP-1) protein is Uroporphyrinogen decarboxylase.